The sequence spans 321 residues: Sideroflexin-3 (321 aa).

Methionine 1 is modified (N-acetylmethionine). The next 4 helical transmembrane spans lie at 146–164 (LGTA…ALGL), 174–194 (LVGR…NIPL), 225–245 (IFQV…IPPV), and 266–286 (LQVG…CALF).

Belongs to the sideroflexin family.

It is found in the mitochondrion membrane. The enzyme catalyses L-serine(in) = L-serine(out). Functionally, mitochondrial serine transporter that mediates transport of serine into mitochondria, an important step of the one-carbon metabolism pathway. Mitochondrial serine is converted to glycine and formate, which then exits to the cytosol where it is used to generate the charged folates that serve as one-carbon donors. The sequence is that of Sideroflexin-3 (Sfxn3) from Rattus norvegicus (Rat).